Consider the following 213-residue polypeptide: Nicotinamidase (213 aa).

Asp10 functions as the Proton acceptor in the catalytic mechanism. Residues Asp52, His54, and His86 each contribute to the Zn(2+) site. Lys111 is a catalytic residue. Cys156 functions as the Nucleophile in the catalytic mechanism.

It belongs to the isochorismatase family.

It carries out the reaction nicotinamide + H2O = nicotinate + NH4(+). It catalyses the reaction pyrazinamide + H2O = pyrazine-2-carboxylate + NH4(+). The protein operates within cofactor biosynthesis; nicotinate biosynthesis; nicotinate from nicotinamide: step 1/1. Its function is as follows. Catalyzes the deamidation of nicotinamide (NAM) into nicotinate. Likely functions in the cyclical salvage pathway for production of NAD from nicotinamide. Functionally, is also able to hydrolyze the first-line antituberculous drug pyrazinamide (PZA) into pyrazinoic acid in vitro, but this reaction is not considered to be physiologically relevant. This is Nicotinamidase from Escherichia coli (strain K12).